We begin with the raw amino-acid sequence, 315 residues long: Methionyl-tRNA formyltransferase (315 aa).

113-116 (SLLP) is a binding site for (6S)-5,6,7,8-tetrahydrofolate.

Belongs to the Fmt family.

The catalysed reaction is L-methionyl-tRNA(fMet) + (6R)-10-formyltetrahydrofolate = N-formyl-L-methionyl-tRNA(fMet) + (6S)-5,6,7,8-tetrahydrofolate + H(+). Attaches a formyl group to the free amino group of methionyl-tRNA(fMet). The formyl group appears to play a dual role in the initiator identity of N-formylmethionyl-tRNA by promoting its recognition by IF2 and preventing the misappropriation of this tRNA by the elongation apparatus. This is Methionyl-tRNA formyltransferase from Escherichia coli O6:K15:H31 (strain 536 / UPEC).